A 215-amino-acid polypeptide reads, in one-letter code: Ras-related protein Rab-5A (215 aa).

GTP-binding residues include serine 29, alanine 30, glycine 32, lysine 33, serine 34, serine 35, histidine 46, glutamate 47, threonine 52, and glycine 78. Mg(2+) is bound at residue serine 34. Short sequence motifs (switch) lie at residues glutamine 44–alanine 56 and alanine 77–alanine 93. Threonine 52 provides a ligand contact to Mg(2+). Serine 84 carries the phosphoserine; by LRRK2 modification. The (Microbial infection) N-beta-linked (GlcNAc) arginine glycan is linked to arginine 120. Residues asparagine 133, lysine 134, aspartate 136, alanine 164, and lysine 165 each contribute to the GTP site. The tract at residues leucine 181–asparagine 215 is disordered. The segment covering glutamate 203–asparagine 215 has biased composition (polar residues). 2 S-geranylgeranyl cysteine lipidation sites follow: cysteine 212 and cysteine 213.

It belongs to the small GTPase superfamily. Rab family. In terms of assembly, interacts with SGSM1 and SGSM3. Interacts with PIK3CB. Interacts with GDI1; this promotes dissociation from membranes; phosphorylation at Ser-84 disrupts this interaction. Interacts with GDI2; phosphorylation at Ser-84 disrupts the interaction. Interacts with EEA1. Interacts with RIN1 and GAPVD1, which regulate its pathway, probably by acting as a GEF. Interacts with RINL. Interacts with ALS2CL, SUN2, ZFYVE20 and RUFY1. Interacts with RABEP1; one RABEP1 homodimer binds two RAB5A chains, but at opposite sides of the dimer. Interacts with OCRL. Interacts with INPP5F. May be a component of a complex composed of RAB5A, DYN2 and PIK3C3. Does not interact with BLOC-3 complex (heterodimer of HPS1 and HPS4). Interacts with CLN5. Interacts with APPL2. Interacts with F8A1/F8A2/F8A3. Found in a complex with F8A1/F8A2/F8A3, HTT and RAB5A; mediates the recruitment of HTT by RAB5A onto early endosomes. Interacts with ATP9A. Interacts with PPP1R21; mediates the recruitment of FERRY complex by RAB5A onto early endosomes. It depends on Mg(2+) as a cofactor. In terms of processing, phosphorylation of Ser-84 in the switch II region by LRRK2 prevents the association of RAB regulatory proteins, including RAB GDP dissociation inhibitors GDI1 and GDI2. Post-translationally, (Microbial infection) Glycosylated on arginine residues by S.typhimurium protein Ssek3.

The protein resides in the cell membrane. The protein localises to the early endosome membrane. It is found in the melanosome. Its subcellular location is the cytoplasmic vesicle. It localises to the cell projection. The protein resides in the ruffle. The protein localises to the membrane. It is found in the cytoplasm. Its subcellular location is the cytosol. It localises to the phagosome membrane. The protein resides in the endosome membrane. The enzyme catalyses GTP + H2O = GDP + phosphate + H(+). Its activity is regulated as follows. Regulated by guanine nucleotide exchange factors (GEFs) including RINL, which promote the exchange of bound GDP for free GTP. Regulated by GTPase activating proteins (GAPs) which increase the GTP hydrolysis activity. Inhibited by GDP dissociation inhibitors (GDIs). Functionally, the small GTPases Rab are key regulators of intracellular membrane trafficking, from the formation of transport vesicles to their fusion with membranes. Rabs cycle between an inactive GDP-bound form and an active GTP-bound form that is able to recruit to membranes different sets of downstream effectors directly responsible for vesicle formation, movement, tethering and fusion. RAB5A is required for the fusion of plasma membranes and early endosomes. Contributes to the regulation of filopodia extension. Required for the exosomal release of SDCBP, CD63, PDCD6IP and syndecan. Regulates maturation of apoptotic cell-containing phagosomes, probably downstream of DYN2 and PIK3C3. The polypeptide is Ras-related protein Rab-5A (Homo sapiens (Human)).